Reading from the N-terminus, the 132-residue chain is Translation initiation factor 5A (132 aa).

Hypusine is present on Lys36.

Belongs to the eIF-5A family.

It localises to the cytoplasm. In terms of biological role, functions by promoting the formation of the first peptide bond. The polypeptide is Translation initiation factor 5A (eIF5A) (Pyrobaculum islandicum (strain DSM 4184 / JCM 9189 / GEO3)).